Here is a 115-residue protein sequence, read N- to C-terminus: MVSRKAVAALLVVHAPAMLASQTEAFVPIFTYGELQRMQEKERSKGQKKSLSVWQRSGEEGPVDPAEPIEEEGNEMIKLTAPLEIGMRMNSRQLEKYRAALEGLLSEMLPQHAAK.

The first 25 residues, 1–25 (MVSRKAVAALLVVHAPAMLASQTEA), serve as a signal peptide directing secretion. The interval 40–74 (EKERSKGQKKSLSVWQRSGEEGPVDPAEPIEEEGN) is disordered.

This sequence belongs to the motilin family.

The protein resides in the secreted. Plays an important role in the regulation of interdigestive gastrointestinal motility and indirectly causes rhythmic contraction of duodenal and colonic smooth muscle. In Macaca mulatta (Rhesus macaque), this protein is Promotilin (MLN).